The sequence spans 876 residues: AP-5 complex subunit beta-1 (876 aa).

Probably part of the adaptor protein complex 5 (AP-5), a tetramer composed of AP5B1, AP5M1, AP5S1 and AP5Z1. Interacts with ZFYVE26 and SPG11.

Its function is as follows. As part of AP-5, a probable fifth adaptor protein complex, it may be involved in endosomal transport. The protein is AP-5 complex subunit beta-1 (Ap5b1) of Rattus norvegicus (Rat).